The following is a 179-amino-acid chain: Adenine phosphoribosyltransferase (179 aa).

The protein belongs to the purine/pyrimidine phosphoribosyltransferase family. As to quaternary structure, homodimer.

It is found in the cytoplasm. The enzyme catalyses AMP + diphosphate = 5-phospho-alpha-D-ribose 1-diphosphate + adenine. It functions in the pathway purine metabolism; AMP biosynthesis via salvage pathway; AMP from adenine: step 1/1. Its function is as follows. Catalyzes a salvage reaction resulting in the formation of AMP, that is energically less costly than de novo synthesis. The chain is Adenine phosphoribosyltransferase from Bradyrhizobium sp. (strain BTAi1 / ATCC BAA-1182).